The chain runs to 65 residues: Large ribosomal subunit protein bL35 (65 aa).

Disordered regions lie at residues 1–23 (MPKL…GGFK) and 36–65 (MTTK…MPYA). Residues 54 to 65 (DTTSLVQQMPYA) show a composition bias toward polar residues.

Belongs to the bacterial ribosomal protein bL35 family.

This Francisella tularensis subsp. tularensis (strain FSC 198) protein is Large ribosomal subunit protein bL35.